A 497-amino-acid chain; its full sequence is Cytoplasmic dynein 1 light intermediate chain 2 (497 aa).

61-68 (GEDGSGKT) contacts ATP. Disordered regions lie at residues 187 to 206 (PEEG…SGSD), 366 to 408 (QQES…IKNN), 423 to 461 (LSKK…TEQC), and 474 to 497 (QEEL…ENEA). A phosphoserine mark is found at Ser194, Ser369, and Ser377. Omega-N-methylarginine is present on Arg383. The segment covering 423-444 (LSKKTGSPGSPSAGGVQSTAKK) has biased composition (polar residues). Phosphothreonine is present on Thr427. A phosphoserine mark is found at Ser429 and Ser432. A compositionally biased stretch (basic and acidic residues) spans 476 to 485 (ELDRMTRKPD). Positions 487 to 497 (MVTNSSTENEA) are enriched in polar residues.

This sequence belongs to the dynein light intermediate chain family. In terms of assembly, homodimer. The cytoplasmic dynein 1 complex consists of two catalytic heavy chains (HCs) and a number of non-catalytic subunits presented by intermediate chains (ICs), light intermediate chains (LICs) and light chains (LCs); the composition seems to vary in respect to the IC, LIC and LC composition. The heavy chain homodimer serves as a scaffold for the probable homodimeric assembly of the respective non-catalytic subunits. The ICs and LICs bind directly to the HC dimer and the LCs assemble on the IC dimer. Self-associates. Interacts with DYNC1H1; DYNC1LI1 and DYNC1LI2 bind mutually exclusive to DYNC1H1. In terms of tissue distribution, ubiquitous.

Its subcellular location is the cytoplasm. The protein localises to the cytoskeleton. Functionally, acts as one of several non-catalytic accessory components of the cytoplasmic dynein 1 complex that are thought to be involved in linking dynein to cargos and to adapter proteins that regulate dynein function. Cytoplasmic dynein 1 acts as a motor for the intracellular retrograde motility of vesicles and organelles along microtubules. May play a role in binding dynein to membranous organelles or chromosomes. The protein is Cytoplasmic dynein 1 light intermediate chain 2 (Dync1li2) of Rattus norvegicus (Rat).